A 147-amino-acid chain; its full sequence is MAGSKSPKGEFAGRKLLLKRKASRWHHYKYVNKALSLKLKADPLEGAPMGRGIVIEKVGLEAKQPNSAIRKCVRVQLIKNGRQVTAFAPGNHAINFIDEHDEVVIEGIGGPSGQAKGDIPGVRYKVVLVGKNSIRELVRGRQEKVKR.

This sequence belongs to the universal ribosomal protein uS12 family. As to quaternary structure, part of the 30S ribosomal subunit.

With S4 and S5 plays an important role in translational accuracy. Located at the interface of the 30S and 50S subunits. The polypeptide is Small ribosomal subunit protein uS12 (Methanococcus maripaludis (strain DSM 14266 / JCM 13030 / NBRC 101832 / S2 / LL)).